We begin with the raw amino-acid sequence, 557 residues long: Formate--tetrahydrofolate ligase 1 (557 aa).

Residue threonine 66–threonine 73 participates in ATP binding.

Belongs to the formate--tetrahydrofolate ligase family.

The catalysed reaction is (6S)-5,6,7,8-tetrahydrofolate + formate + ATP = (6R)-10-formyltetrahydrofolate + ADP + phosphate. It functions in the pathway one-carbon metabolism; tetrahydrofolate interconversion. The polypeptide is Formate--tetrahydrofolate ligase 1 (Streptococcus sanguinis (strain SK36)).